Reading from the N-terminus, the 211-residue chain is 3,4-dihydroxy-2-butanone 4-phosphate synthase (211 aa).

Residues 37–38 (RE), aspartate 42, 150–154 (RIGHT), and glutamate 174 each bind D-ribulose 5-phosphate. Glutamate 38 lines the Mg(2+) pocket. Histidine 153 is a Mg(2+) binding site.

Belongs to the DHBP synthase family. As to quaternary structure, homodimer. Mg(2+) serves as cofactor. Mn(2+) is required as a cofactor.

The enzyme catalyses D-ribulose 5-phosphate = (2S)-2-hydroxy-3-oxobutyl phosphate + formate + H(+). It functions in the pathway cofactor biosynthesis; riboflavin biosynthesis; 2-hydroxy-3-oxobutyl phosphate from D-ribulose 5-phosphate: step 1/1. Functionally, catalyzes the conversion of D-ribulose 5-phosphate to formate and 3,4-dihydroxy-2-butanone 4-phosphate. In Buchnera aphidicola subsp. Baizongia pistaciae (strain Bp), this protein is 3,4-dihydroxy-2-butanone 4-phosphate synthase.